A 90-amino-acid polypeptide reads, in one-letter code: Small ribosomal subunit protein uS17 (90 aa).

Belongs to the universal ribosomal protein uS17 family. In terms of assembly, part of the 30S ribosomal subunit.

One of the primary rRNA binding proteins, it binds specifically to the 5'-end of 16S ribosomal RNA. The protein is Small ribosomal subunit protein uS17 of Gluconobacter oxydans (strain 621H) (Gluconobacter suboxydans).